We begin with the raw amino-acid sequence, 480 residues long: Glutarate-semialdehyde dehydrogenase (480 aa).

NADP(+) contacts are provided by residues 156 to 157 (WN), 180 to 183 (KPAS), and 233 to 234 (GS). Residue glutamate 255 is the Proton acceptor of the active site. An NADP(+)-binding site is contributed by leucine 256. Cysteine 289 (nucleophile) is an active-site residue. NADP(+) is bound at residue glutamate 384.

It belongs to the aldehyde dehydrogenase family.

The catalysed reaction is 5-oxopentanoate + NADP(+) + H2O = glutarate + NADPH + 2 H(+). The protein operates within amino-acid degradation. Catalyzes the conversion of 5-oxopentanoate (glutarate semialdehyde) to glutarate. Involved in L-lysine degradation. The protein is Glutarate-semialdehyde dehydrogenase of Pseudomonas putida (strain ATCC 47054 / DSM 6125 / CFBP 8728 / NCIMB 11950 / KT2440).